The following is a 637-amino-acid chain: MLQQIRGPADLQHLSQAQLRELAQEIREFLVHKVAATGGHLGPNLGVVELTLALHRVFDSPHDPIIFDTGHQTYVHKMLTGRAQDFESLRKKGGLSGYPCRAESEHDWVESSHASAALSYADGLSKAFELSGLRNRHVVAVVGDGALTGGMCWEALNNIAASHRPVVIVVNDNGRSYAPTIGGVADHLAKLRLQPAYEQVLEKGRDVVRAVPLVGEVCYHFMHSVKAGIKDSLSPQLLFTDLGLKYVGPVDGHDERAVEVALRSARGFGGPVIVHVVTRKGMGYGPAEADVAEQMHSTVPIDPATGQATKLAGPGWTTTFADALIEYAGKRRDIVAITAAMPGPTGLTAFGQQFPDRLFDVGIAEQHAMTSAAGLAMGGMHPVVAIYSTFLNRAFDQIMMDVALHQLPVTMVLDRAGITGSDGPSHNGMWDLSMLGIIPGIRVAAPRDATRLREELGEALDVDDGPTALRFPKGDVGEDIPALERRDGMDVLAVPASGLNHDVLLIAVGALASMALAVAKRLHNQGIGVTVIDPRWVLPVADGIGDLAVAHKLVVTLEDNGVNGGVGSAVSAALRRAEIGVHCRDVGLPQQFFEHASRGELLADLRLTDQDVARRVTGWVAALGACVSEAEIKEHLD.

Thiamine diphosphate is bound by residues His71 and 112 to 114 (SHA). Position 144 (Asp144) interacts with Mg(2+). Residues 145–146 (GA), Asn173, Tyr284, and Glu365 contribute to the thiamine diphosphate site. Asn173 provides a ligand contact to Mg(2+).

The protein belongs to the transketolase family. DXPS subfamily. In terms of assembly, homodimer. Mg(2+) serves as cofactor. Requires thiamine diphosphate as cofactor.

It carries out the reaction D-glyceraldehyde 3-phosphate + pyruvate + H(+) = 1-deoxy-D-xylulose 5-phosphate + CO2. It participates in metabolic intermediate biosynthesis; 1-deoxy-D-xylulose 5-phosphate biosynthesis; 1-deoxy-D-xylulose 5-phosphate from D-glyceraldehyde 3-phosphate and pyruvate: step 1/1. In terms of biological role, catalyzes the acyloin condensation reaction between C atoms 2 and 3 of pyruvate and glyceraldehyde 3-phosphate to yield 1-deoxy-D-xylulose-5-phosphate (DXP). This is 1-deoxy-D-xylulose-5-phosphate synthase from Mycobacterium ulcerans (strain Agy99).